Consider the following 183-residue polypeptide: Glutathione-regulated potassium-efflux system ancillary protein KefG (183 aa).

This sequence belongs to the NAD(P)H dehydrogenase (quinone) family. KefG subfamily. As to quaternary structure, interacts with KefB.

It is found in the cell inner membrane. It carries out the reaction a quinone + NADH + H(+) = a quinol + NAD(+). The enzyme catalyses a quinone + NADPH + H(+) = a quinol + NADP(+). Functionally, regulatory subunit of a potassium efflux system that confers protection against electrophiles. Required for full activity of KefB. This Escherichia coli O6:K15:H31 (strain 536 / UPEC) protein is Glutathione-regulated potassium-efflux system ancillary protein KefG.